The following is a 1197-amino-acid chain: DNA-directed RNA polymerase subunit beta (1197 aa).

It belongs to the RNA polymerase beta chain family. In terms of assembly, the RNAP catalytic core consists of 2 alpha, 1 beta, 1 beta' and 1 omega subunit. When a sigma factor is associated with the core the holoenzyme is formed, which can initiate transcription.

It carries out the reaction RNA(n) + a ribonucleoside 5'-triphosphate = RNA(n+1) + diphosphate. In terms of biological role, DNA-dependent RNA polymerase catalyzes the transcription of DNA into RNA using the four ribonucleoside triphosphates as substrates. The sequence is that of DNA-directed RNA polymerase subunit beta from Streptococcus pyogenes serotype M12 (strain MGAS9429).